A 437-amino-acid chain; its full sequence is Nuclear distribution protein PAC1 (437 aa).

Residues 64 to 94 (LSVIRLQRKVMDLETRLEAAEREASSTHKAN) adopt a coiled-coil conformation. WD repeat units follow at residues 114-153 (LHKQPVNAVSFHPFHSTLASACEDGNIRIWDYELGEIETT), 156-217 (AHTR…ANVK), 221-260 (GHDHTISAVKFTASGNHVISASRDKTVRVWSVQSGYCVRT), 263-301 (GHTDWVKSCAALNEEFIFSAGIDHVTRVSEFVSGDGKMT), 304-356 (GHEH…LLIL), 358-397 (GHDNWVRGVVLHPAGRYLVSVSDDKTMRCWDLEQGGRCIR), and 401-437 (AHGHFVTCVAWAPNDVNGRVRCLVATGGVDGQVKVWQ). The interval 165-186 (DFSQPDTGASRDKSHDKPRADV) is disordered. Residues 173-186 (ASRDKSHDKPRADV) show a composition bias toward basic and acidic residues.

Belongs to the WD repeat LIS1/nudF family. In terms of assembly, self-associates. Interacts with NDL1 and dynein.

The protein resides in the cytoplasm. The protein localises to the cytoskeleton. Its subcellular location is the spindle pole. In terms of biological role, positively regulates the activity of the minus-end directed microtubule motor protein dynein. Plays a central role in positioning the mitotic spindle at the bud neck during cell division. Targets cytoplasmic dynein to microtubule plus ends, thereby promoting dynein-mediated microtubule sliding along the bud cortex and consequently the movement of the mitotic spindle to the bud neck. This is Nuclear distribution protein PAC1 from Yarrowia lipolytica (strain CLIB 122 / E 150) (Yeast).